We begin with the raw amino-acid sequence, 387 residues long: S-adenosylmethionine synthase (387 aa).

An ATP-binding site is contributed by His-15. A Mg(2+)-binding site is contributed by Asp-17. Glu-43 contributes to the K(+) binding site. 2 residues coordinate L-methionine: Glu-56 and Gln-99. Positions 99 to 109 (QSPDIAQGVNA) are flexible loop. Residues 166-168 (DAK), 232-233 (RF), Asp-241, 247-248 (RK), Ala-264, and Lys-268 contribute to the ATP site. L-methionine is bound at residue Asp-241. Lys-272 contributes to the L-methionine binding site.

It belongs to the AdoMet synthase family. As to quaternary structure, homotetramer; dimer of dimers. Mg(2+) is required as a cofactor. The cofactor is K(+).

It is found in the cytoplasm. It carries out the reaction L-methionine + ATP + H2O = S-adenosyl-L-methionine + phosphate + diphosphate. It participates in amino-acid biosynthesis; S-adenosyl-L-methionine biosynthesis; S-adenosyl-L-methionine from L-methionine: step 1/1. Catalyzes the formation of S-adenosylmethionine (AdoMet) from methionine and ATP. The overall synthetic reaction is composed of two sequential steps, AdoMet formation and the subsequent tripolyphosphate hydrolysis which occurs prior to release of AdoMet from the enzyme. The chain is S-adenosylmethionine synthase from Dechloromonas aromatica (strain RCB).